Reading from the N-terminus, the 168-residue chain is uncharacterized protein (168 aa).

2 4Fe-4S ferredoxin-type domains span residues 48 to 78 and 91 to 122; these read KIPKTVIEELCIGCEGCANVCPTKAIEMIPI and KIPKINPEKCVYCLYCHDFCPVFSVFNEISPI. Residues cysteine 58, cysteine 61, cysteine 64, cysteine 68, cysteine 100, cysteine 103, cysteine 106, and cysteine 110 each coordinate [4Fe-4S] cluster.

This is an uncharacterized protein from Methanocaldococcus jannaschii (strain ATCC 43067 / DSM 2661 / JAL-1 / JCM 10045 / NBRC 100440) (Methanococcus jannaschii).